Consider the following 77-residue polypeptide: Small ribosomal subunit protein bS18 (77 aa).

Belongs to the bacterial ribosomal protein bS18 family. As to quaternary structure, part of the 30S ribosomal subunit. Forms a tight heterodimer with protein bS6.

Binds as a heterodimer with protein bS6 to the central domain of the 16S rRNA, where it helps stabilize the platform of the 30S subunit. In Bacillus thuringiensis subsp. konkukian (strain 97-27), this protein is Small ribosomal subunit protein bS18.